The sequence spans 187 residues: Bis(5'-nucleosyl)-tetraphosphatase, symmetrical (187 aa).

One can recognise an HD domain in the interval 18 to 132 (RYQHTIGVME…IFLADYIEPN (115 aa)). Histidine 21 lines the ADP pocket. Residues histidine 21, histidine 50, and aspartate 51 each contribute to the Fe cation site. ADP contacts are provided by residues 51–54 (DYAK), histidine 83, 109–110 (HT), aspartate 127, arginine 133, and 170–175 (PIYPDT). Residue aspartate 127 participates in Fe cation binding.

Belongs to the Ap4A hydrolase YqeK family. In terms of assembly, homodimer.

The catalysed reaction is P(1),P(4)-bis(5'-adenosyl) tetraphosphate + H2O = 2 ADP + 2 H(+). Hydrolyzes diadenosine 5',5'''-P1,P4-tetraphosphate (Ap4A) to yield ADP. This Halalkalibacterium halodurans (strain ATCC BAA-125 / DSM 18197 / FERM 7344 / JCM 9153 / C-125) (Bacillus halodurans) protein is Bis(5'-nucleosyl)-tetraphosphatase, symmetrical.